Consider the following 566-residue polypeptide: Glucose-6-phosphate isomerase (566 aa).

E374 serves as the catalytic Proton donor. Catalysis depends on residues H405 and K529.

The protein belongs to the GPI family.

It is found in the cytoplasm. It carries out the reaction alpha-D-glucose 6-phosphate = beta-D-fructose 6-phosphate. It functions in the pathway carbohydrate biosynthesis; gluconeogenesis. It participates in carbohydrate degradation; glycolysis; D-glyceraldehyde 3-phosphate and glycerone phosphate from D-glucose: step 2/4. Catalyzes the reversible isomerization of glucose-6-phosphate to fructose-6-phosphate. This Bifidobacterium longum (strain NCC 2705) protein is Glucose-6-phosphate isomerase.